Consider the following 530-residue polypeptide: Laccase-2 (530 aa).

Residues 1-23 (MLLSSAFVGSCLAILNFAAAVSA) form the signal peptide. 2 consecutive Plastocyanin-like domains span residues 36–154 (NKVI…YDPE) and 167–311 (TTII…RYTN). N82 carries N-linked (GlcNAc...) asparagine glycosylation. Positions 88 and 90 each coordinate Cu cation. Disulfide bonds link C109–C520 and C141–C228. N-linked (GlcNAc...) asparagine glycosylation occurs at N120. Cu cation is bound by residues H133 and H135. N-linked (GlcNAc...) asparagine glycosylation is found at N191, N240, N292, N311, N366, N375, N392, and N412. The Plastocyanin-like 3 domain maps to 379–504 (YVNPTVPVLL…FAVVLAEAPQ (126 aa)). Residues H428, H431, H433, H484, C485, H486, and H490 each coordinate Cu cation.

This sequence belongs to the multicopper oxidase family. It depends on Cu cation as a cofactor.

The protein localises to the secreted. The enzyme catalyses 4 hydroquinone + O2 = 4 benzosemiquinone + 2 H2O. Inhibited by chloride ions. Inhibited by citrate. Inhibited by oxalate. Activated by acetate. Its function is as follows. In vitro, has activity towards 2,2'-azino-bis(3-ethylbenzthiazoline-6-sulfonic acid) (ABTS), 2,6-dimethoxy-phenol, and guaiacol. Although brown rot fungi preferentially degrade hemicellulose and cellulose, the enzyme may contribute to generating small amounts of lignin breakdown products required for catalytic reactions. The chain is Laccase-2 from Fomitopsis schrenkii (Brown rot fungus).